The following is a 154-amino-acid chain: MTVLASNDPPTAVLNAEQIMGLLPHRYPFALVDRVLEHVPGERAVALKNVTFNEPQFQGHFPGRPLMPGVLIVEAMAQVGGLIVTQMPDLPKGLFVFAGIDGVRFRRPVVPGDQLRITCELLSLKRKRFGKVKAEATVDGQLVCSGELMFSLVD.

Residue H60 is part of the active site.

The protein belongs to the thioester dehydratase family. FabZ subfamily.

It is found in the cytoplasm. The catalysed reaction is a (3R)-hydroxyacyl-[ACP] = a (2E)-enoyl-[ACP] + H2O. Involved in unsaturated fatty acids biosynthesis. Catalyzes the dehydration of short chain beta-hydroxyacyl-ACPs and long chain saturated and unsaturated beta-hydroxyacyl-ACPs. The polypeptide is 3-hydroxyacyl-[acyl-carrier-protein] dehydratase FabZ (Synechococcus sp. (strain CC9311)).